Reading from the N-terminus, the 380-residue chain is Cystathionine gamma-synthase (380 aa).

N6-(pyridoxal phosphate)lysine is present on Lys195.

Belongs to the trans-sulfuration enzymes family. As to quaternary structure, homotetramer. Pyridoxal 5'-phosphate serves as cofactor.

Its subcellular location is the cytoplasm. The enzyme catalyses O-succinyl-L-homoserine + L-cysteine = L,L-cystathionine + succinate + H(+). Catalyzes the formation of L-cystathionine from O-succinyl-L-homoserine (OSHS) and L-cysteine, via a gamma-replacement reaction. In the absence of thiol, catalyzes gamma-elimination to form 2-oxobutanoate, succinate and ammonia. The polypeptide is Cystathionine gamma-synthase (metB) (Helicobacter pylori (strain ATCC 700392 / 26695) (Campylobacter pylori)).